The sequence spans 877 residues: AP-5 complex subunit beta-1 (877 aa).

Probably part of the adaptor protein complex 5 (AP-5), a tetramer composed of AP5B1, AP5M1, AP5S1 and AP5Z1. Interacts with ZFYVE26 and SPG11.

In terms of biological role, as part of AP-5, a probable fifth adaptor protein complex, it may be involved in endosomal transport. The protein is AP-5 complex subunit beta-1 (AP5B1) of Bos taurus (Bovine).